Reading from the N-terminus, the 78-residue chain is uncharacterized protein (78 aa).

A run of 2 helical transmembrane segments spans residues 12–32 (LVSV…ICVV) and 51–71 (GVGA…VAVH).

It is found in the cell membrane. This is an uncharacterized protein from Treponema pallidum (strain Nichols).